The primary structure comprises 307 residues: Myeloid-associated differentiation marker-like protein 2 (307 aa).

2 consecutive MARVEL domains span residues 17–154 and 159–303; these read AVTS…ARPG and YMAT…RIRF. Helical transmembrane passes span 53–73, 90–110, 129–149, 163–183, 198–218, 229–249, and 278–298; these read FCMA…ACEF, AFAM…PLYF, LAAS…VALT, VSGL…GALV, VAVY…SVMG, RLVV…AVIW, and LVVA…LAYS.

It belongs to the MAL family.

The protein resides in the membrane. This Homo sapiens (Human) protein is Myeloid-associated differentiation marker-like protein 2 (MYADML2).